The primary structure comprises 285 residues: BAG family molecular chaperone regulator 2 (285 aa).

Residues 37–113 (RGIRVRVKYG…LILIEDPISQ (77 aa)) form the Ubiquitin-like domain. A BAG domain is found at 132 to 210 (AISDISFQVE…KYVEALDLLK (79 aa)). Phosphoserine is present on serine 244.

In terms of assembly, binds to the ATPase domain of HSP70/HSC70 chaperones.

Its function is as follows. Co-chaperone that regulates diverse cellular pathways, such as programmed cell death and stress responses. This chain is BAG family molecular chaperone regulator 2 (BAG2), found in Arabidopsis thaliana (Mouse-ear cress).